The sequence spans 590 residues: DNA primase (590 aa).

The CHC2-type zinc finger occupies 37–61 (CPFHKEKTPSFSVSPTKQFYHCFSC). The Toprim domain maps to 255–337 (GRILVVEGYM…DKSLHFLFLP (83 aa)). Residues Glu261, Asp305, and Asp307 each coordinate Mg(2+).

The protein belongs to the DnaG primase family. Monomer. Interacts with DnaB. The cofactor is Zn(2+). Mg(2+) serves as cofactor.

It carries out the reaction ssDNA + n NTP = ssDNA/pppN(pN)n-1 hybrid + (n-1) diphosphate.. In terms of biological role, RNA polymerase that catalyzes the synthesis of short RNA molecules used as primers for DNA polymerase during DNA replication. This Neisseria meningitidis serogroup A / serotype 4A (strain DSM 15465 / Z2491) protein is DNA primase.